Consider the following 221-residue polypeptide: Probable chemoreceptor glutamine deamidase CheD 1 (221 aa).

It belongs to the CheD family.

The catalysed reaction is L-glutaminyl-[protein] + H2O = L-glutamyl-[protein] + NH4(+). Probably deamidates glutamine residues to glutamate on methyl-accepting chemotaxis receptors (MCPs), playing an important role in chemotaxis. This chain is Probable chemoreceptor glutamine deamidase CheD 1, found in Methanosarcina mazei (strain ATCC BAA-159 / DSM 3647 / Goe1 / Go1 / JCM 11833 / OCM 88) (Methanosarcina frisia).